We begin with the raw amino-acid sequence, 88 residues long: Small ribosomal subunit protein bS20 (88 aa).

The disordered stretch occupies residues 1-27; sequence MANSKTAKKRAIQSEKRRQHNASRRSM.

It belongs to the bacterial ribosomal protein bS20 family.

Its function is as follows. Binds directly to 16S ribosomal RNA. In Shewanella amazonensis (strain ATCC BAA-1098 / SB2B), this protein is Small ribosomal subunit protein bS20.